Consider the following 131-residue polypeptide: Large-conductance mechanosensitive channel (131 aa).

3 helical membrane passes run 8–28 (FALK…GAFG), 30–50 (IVTS…VGGI), and 72–92 (GQFI…FMFI).

Belongs to the MscL family. In terms of assembly, homopentamer.

Its subcellular location is the cell membrane. In terms of biological role, channel that opens in response to stretch forces in the membrane lipid bilayer. May participate in the regulation of osmotic pressure changes within the cell. The polypeptide is Large-conductance mechanosensitive channel (Alkaliphilus oremlandii (strain OhILAs) (Clostridium oremlandii (strain OhILAs))).